A 523-amino-acid chain; its full sequence is Transcription initiation factor TFIID subunit 4 (523 aa).

Disordered stretches follow at residues 1–100 and 185–241; these read MSLP…AASD and ASVE…VQGG. Residues 58 to 77 are compositionally biased toward low complexity; sequence QMQPPRQPIQQQMQHFQSPS. The span at 78 to 87 shows a compositional bias: pro residues; that stretch reads PMAPQGPPGT. The TAFH domain occupies 101-199; sequence DKNVTKCVRF…VNPPPGYVFN (99 aa). Over residues 204–213 the composition is skewed to pro residues; it reads PGPPQPPPPQ. The span at 214–236 shows a compositional bias: low complexity; that stretch reads QQSQQQPPLEMRQIPNPNQIPPQ. Residues 329 to 383 are histone-fold; it reads LKPDEVLNRITKRMMSSCSVEEEALVAISDAVESHLRELITLMAGVAEHRVESLR. Residues 333–382 form a necessary and sufficient for interaction with oma-1 region; sequence EVLNRITKRMMSSCSVEEEALVAISDAVESHLRELITLMAGVAEHRVESL. The segment at 407 to 435 is disordered; the sequence is QEEELRESREKESLIRMSKNKNSGKETIE.

Belongs to the TAF4 family. As to quaternary structure, component of the TFIID basal transcription factor complex, composed of TATA-box-binding protein tbp-1, and a number of TBP-associated factors (TAFs). Interacts (via histone-fold domain) with oma-1 (via histone-fold domain). May also interact with oma-2. Interacts (via histone-fold domain) with taf-12 (via the histone-fold domain).

The protein resides in the nucleus. It is found in the cytoplasm. The TFIID basal transcription factor complex plays a major role in the initiation of RNA polymerase II (Pol II)-dependent transcription. TFIID recognizes and binds promoters via its subunit tbp-1, a TATA-box-binding protein, and promotes assembly of the pre-initiation complex (PIC). The TFIID complex consists of tbp-1 and TBP-associated factors (TAFs), including taf-4. Essential for early embryonic development, probably acting via activating transcription initiation by RNA polymerase II, as part of the TFIID complex. In early embryos, but not oocytes, remains, presumably inactive, in the cytoplasm as a result of binding to oma-1. Upon degradation of oma-1, taf-4 is released and bound by taf-12, and the taf-4/12 heterodimer translocates to the nucleus and transcriptional repression is relieved. Involved in lifespan extension in a manner dependent upon mitochondrial function. Plays a role in modulating polyribosome formation. This chain is Transcription initiation factor TFIID subunit 4, found in Caenorhabditis elegans.